The primary structure comprises 224 residues: Ribonuclease 3 (224 aa).

An RNase III domain is found at 4 to 127 (IEKLEQSLTY…IIGAIHLEAG (124 aa)). E40 is a binding site for Mg(2+). Residue D44 is part of the active site. Residues D113 and E116 each contribute to the Mg(2+) site. E116 is an active-site residue. The region spanning 154-223 (DYKTKLQEIT…AKIALEKLGA (70 aa)) is the DRBM domain.

Belongs to the ribonuclease III family. In terms of assembly, homodimer. The cofactor is Mg(2+).

It localises to the cytoplasm. It carries out the reaction Endonucleolytic cleavage to 5'-phosphomonoester.. Functionally, digests double-stranded RNA. Involved in the processing of primary rRNA transcript to yield the immediate precursors to the large and small rRNAs (23S and 16S). Also processes some mRNAs, and tRNAs when they are encoded in the rRNA operon. In terms of biological role, CRISPR (clustered regularly interspaced short palindromic repeat) is an adaptive immune system that provides protection against mobile genetic elements (viruses, transposable elements and conjugative plasmids). CRISPR clusters contain spacers, sequences complementary to antecedent mobile elements, and target invading nucleic acids. CRISPR clusters are transcribed and processed into CRISPR RNA (crRNA). In this organism endogenous ribonuclease 3 and Cas9 are required for correct coprocessing of pre-crRNA and the trans-encoded small RNA (tracrRNA). Cas9, crRNA and tracrRNA are required for cleavage of invading DNA. Complements pre-crRNA and tracrRNA coprocessing defects in an rnc deletion in S.pyogenes strain 370. The polypeptide is Ribonuclease 3 (Campylobacter jejuni subsp. jejuni serotype O:2 (strain ATCC 700819 / NCTC 11168)).